Consider the following 181-residue polypeptide: MDKNTTSELAASIRSIPDYPKPGIIFRDITTLLGNPRAFRRAVDELVQPYAGTKIDKIAGMEARGFILGGAVAHQLSSGFVPIRKKGKLPHETVRIAYSLEYGVDEMEMHRDAVQPGEKVILVDDLIATGGTAVGATKLLRQIGAEVVGACFVIDLPDLGGRKKLEELGVVVHTLVEFSGH.

The protein belongs to the purine/pyrimidine phosphoribosyltransferase family. As to quaternary structure, homodimer.

It is found in the cytoplasm. It carries out the reaction AMP + diphosphate = 5-phospho-alpha-D-ribose 1-diphosphate + adenine. It functions in the pathway purine metabolism; AMP biosynthesis via salvage pathway; AMP from adenine: step 1/1. Its function is as follows. Catalyzes a salvage reaction resulting in the formation of AMP, that is energically less costly than de novo synthesis. The sequence is that of Adenine phosphoribosyltransferase from Rhizobium leguminosarum bv. trifolii (strain WSM2304).